The sequence spans 336 residues: Glycerol-3-phosphate dehydrogenase [NAD(P)+] (336 aa).

NADPH-binding residues include serine 16, tyrosine 17, histidine 37, and lysine 111. Sn-glycerol 3-phosphate is bound by residues lysine 111, glycine 140, and threonine 142. Alanine 144 is a binding site for NADPH. Sn-glycerol 3-phosphate contacts are provided by lysine 196, aspartate 249, serine 259, arginine 260, and asparagine 261. Lysine 196 acts as the Proton acceptor in catalysis. Residue arginine 260 coordinates NADPH. Residues valine 284 and glutamate 286 each contribute to the NADPH site.

The protein belongs to the NAD-dependent glycerol-3-phosphate dehydrogenase family.

The protein resides in the cytoplasm. The catalysed reaction is sn-glycerol 3-phosphate + NAD(+) = dihydroxyacetone phosphate + NADH + H(+). It catalyses the reaction sn-glycerol 3-phosphate + NADP(+) = dihydroxyacetone phosphate + NADPH + H(+). The protein operates within membrane lipid metabolism; glycerophospholipid metabolism. In terms of biological role, catalyzes the reduction of the glycolytic intermediate dihydroxyacetone phosphate (DHAP) to sn-glycerol 3-phosphate (G3P), the key precursor for phospholipid synthesis. This chain is Glycerol-3-phosphate dehydrogenase [NAD(P)+], found in Actinobacillus pleuropneumoniae serotype 3 (strain JL03).